Reading from the N-terminus, the 275-residue chain is NH(3)-dependent NAD(+) synthetase (275 aa).

Residue 46-53 (GISGGQDS) coordinates ATP. Residue Asp52 coordinates Mg(2+). Position 140 (Arg140) interacts with deamido-NAD(+). Residue Thr160 coordinates ATP. Glu165 is a Mg(2+) binding site. Residues Lys173 and Asp180 each contribute to the deamido-NAD(+) site. ATP contacts are provided by Lys189 and Thr211. 260 to 261 (HK) contributes to the deamido-NAD(+) binding site.

This sequence belongs to the NAD synthetase family. As to quaternary structure, homodimer.

It catalyses the reaction deamido-NAD(+) + NH4(+) + ATP = AMP + diphosphate + NAD(+) + H(+). The protein operates within cofactor biosynthesis; NAD(+) biosynthesis; NAD(+) from deamido-NAD(+) (ammonia route): step 1/1. Its function is as follows. Catalyzes the ATP-dependent amidation of deamido-NAD to form NAD. Uses ammonia as a nitrogen source. The polypeptide is NH(3)-dependent NAD(+) synthetase (Escherichia coli O8 (strain IAI1)).